The following is a 335-amino-acid chain: Putative peroxisomal biogenesis factor 19 (335 aa).

Disordered stretches follow at residues 14–70 (LETQ…LGND) and 104–124 (YNKD…PSEE). Composition is skewed to low complexity over residues 22–55 (PTTT…PSTI) and 109–119 (NNNSDDSNNGG).

This sequence belongs to the peroxin-19 family.

The protein resides in the peroxisome. The chain is Putative peroxisomal biogenesis factor 19 (pex19) from Dictyostelium discoideum (Social amoeba).